The primary structure comprises 1493 residues: MPNEGIPHSSQTQEQDCLQSQPVSNNEEMAIKQESGGDGEVEEYLSFRSVGDGLSTSAVGCASAAPRRGPALLHIDRHQIQAVEPSAQALELQGLGVDVYDQDVLEQGVLQQVDNAIHEASRASQLVDVEKEYRSVLDDLTSCTTSLRQINKIIEQLSPQAATSRDINRKLDSVKRQKYNKEQQLKKITAKQKHLQAILGGAEVKIELDHASLEEDAEPGPSSLGSMLMPVQETAWEELIRTGQMTPFGTQIPQKQEKKPRKIMLNEASGFEKYLADQAKLSFERKKQGCNKRAARKAPAPVTPPAPVQNKNKPNKKARVLSKKEERLKKHIKKLQKRALQFQGKVGLPKARRPWESDMRPEAEGDSEGEESEYFPTEEEEEEEDDEVEGAEADLSGDGTDYELKPLPKGGKRQKKVPVQEIDDDFFPSSGEEAEAASVGEGGGGGRKVGRYRDDGDEDYYKQRLRRWNKLRLQDKEKRLKLEDDSEESDAEFDEGFKVPGFLFKKLFKYQQTGVRWLWELHCQQAGGILGDEMGLGKTIQIIAFLAGLSYSKIRTRGSNYRFEGLGPTVIVCPTTVMHQWVKEFHTWWPPFRVAILHETGSYTHKKEKLIRDVAHCHGILITSYSYIRLMQDDISRYDWHYVILDEGHKIRNPNAAVTLACKQFRTPHRIILSGSPMQNNLRELWSLFDFIFPGKLGTLPVFMEQFSVPITMGGYSNASPVQVKTAYKCACVLRDTINPYLLRRMKSDVKMSLSLPDKNEQVLFCRLTDEQHKVYQNFVDSKEVYRILNGEMQIFSGLIALRKICNHPDLFSGGPKNLKGLPDDELEEDQFGYWKRSGKMIVVESLLKIWHKQGQRVLLFSQSRQMLDILEVFLRAQKYTYLKMDGTTTIASRQPLITRYNEDTSIFVFLLTTRVGGLGVNLTGANRVVIYDPDWNPSTDTQARERAWRIGQKKQVTVYRLLTAGTIEEKIYHRQIFKQFLTNRVLKDPKQRRFFKSNDLYELFTLTSPDASQSTETSAIFAGTGSDVQTPKCHLKRRIQPAFGADHDVPKRKKFPASNISVNDATSSEEKSEAKGAEVNAVTSNRSDPLKDDPHMSSNVTSNDRLGEETNAVSGPEELSVISGNGECSNSSGTGKTSMPSGDESIDEKLGLSYKRERPSQAQTEAFWENKQMENNFYKHKSKTKHHSVAEEETLEKHLRPKQKPKNSKHCRDAKFEGTRIPHLVKKRRYQKQDSENKSEAKEQSNDDYVLEKLFKKSVGVHSVMKHDAIMDGASPDYVLVEAEANRVAQDALKALRLSRQRCLGAVSGVPTWTGHRGISGAPAGKKSRFGKKRNSNFSVQHPSSTSPTEKCQDGIMKKEGKDNVPEHFSGRAEDADSSSGPLASSSLLAKMRARNHLILPERLESESGHLQEASALLPTTEHDDLLVEMRNFIAFQAHTDGQASTREILQEFESKLSASQSCVFRELLRNLCTFHRTSGGEGIWKLKPEYC.

Residues 1–39 are disordered; sequence MPNEGIPHSSQTQEQDCLQSQPVSNNEEMAIKQESGGDG. The segment at 1–510 is N-terminal domain; essential for its chromatin remodeling activity; that stretch reads MPNEGIPHSS…GFLFKKLFKY (510 aa). Over residues 8–27 the composition is skewed to polar residues; sequence HSSQTQEQDCLQSQPVSNNE. At serine 10 the chain carries Phosphoserine; by ATM. Serine 158 carries the post-translational modification Phosphoserine; by CDK2. Position 170 is an N6-methylated lysine; by EHMT2 (lysine 170). A Glycyl lysine isopeptide (Lys-Gly) (interchain with G-Cter in SUMO3) cross-link involves residue lysine 205. Residue lysine 255 forms a Glycyl lysine isopeptide (Lys-Gly) (interchain with G-Cter in SUMO2) linkage. Disordered regions lie at residues 287 to 323 and 344 to 453; these read KQGC…VLSK and GKVG…GRYR. Lysine 297 is subject to N6-methylated lysine; by EHMT2. Over residues 353–363 the composition is skewed to basic and acidic residues; it reads RPWESDMRPEA. Over residues 364-392 the composition is skewed to acidic residues; sequence EGDSEGEESEYFPTEEEEEEEDDEVEGAE. Serine 429 and serine 430 each carry phosphoserine. At lysine 448 the chain carries N6-methylated lysine; by EHMT2. Phosphoserine occurs at positions 486 and 489. The Helicase ATP-binding domain maps to 519 to 695; the sequence is WELHCQQAGG…WSLFDFIFPG (177 aa). 532–539 provides a ligand contact to ATP; that stretch reads DEMGLGKT. The DEAH box motif lies at 646 to 649; the sequence is DEGH. Residues 843-1002 form the Helicase C-terminal domain; that stretch reads VVESLLKIWH…RRFFKSNDLY (160 aa). Disordered stretches follow at residues 1042 to 1147, 1181 to 1247, and 1318 to 1384; these read PAFG…DESI, HKSK…EQSN, and RGIS…SGPL. Lysine 1054 is modified (N6-methylated lysine; by EHMT2). The segment covering 1123–1141 has biased composition (polar residues); sequence ISGNGECSNSSGTGKTSMP. The residue at position 1142 (serine 1142) is a Phosphoserine. Basic residues predominate over residues 1200-1210; it reads LRPKQKPKNSK. 2 stretches are compositionally biased toward basic and acidic residues: residues 1211–1221 and 1232–1247; these read HCRDAKFEGTR and QKQD…EQSN. The segment covering 1327 to 1336 has biased composition (basic residues); that stretch reads KKSRFGKKRN. The segment covering 1337–1351 has biased composition (polar residues); that stretch reads SNFSVQHPSSTSPTE. Residue serine 1348 is modified to Phosphoserine. The segment covering 1352 to 1376 has biased composition (basic and acidic residues); that stretch reads KCQDGIMKKEGKDNVPEHFSGRAED. The CSA-interacting motif (CIM) signature appears at 1386 to 1398; the sequence is SSSLLAKMRARNH. Residues 1400 to 1428 are ubiquitin-binding domain (UBD); sequence ILPERLESESGHLQEASALLPTTEHDDLL. Residues 1429 to 1493 form a winged-helix domain (WHD) region; that stretch reads VEMRNFIAFQ…GIWKLKPEYC (65 aa). Positions 1446 to 1493 are essential for its interaction with RNA polymerase II, transcription-coupled nucleotide excision repair activity, association with chromatin after UV irradiation and for mediating the UV-induced translocation of ERRC8 to the nuclear matrix; it reads STREILQEFESKLSASQSCVFRELLRNLCTFHRTSGGEGIWKLKPEYC.

It belongs to the SNF2/RAD54 helicase family. As to quaternary structure, homodimer. Binds DNA. Interacts with ERCC8. Interacts with RNA polymerase II; interaction is enhanced by UV irradiation. Component of the B-WICH complex, at least composed of SMARCA5/SNF2H, BAZ1B/WSTF, SF3B1, DEK, MYO1C, ERCC6, MYBBP1A and DDX21. Interacts with KIAA1530/UVSSA. Interacts with ELOA and CUL5; the interaction is induced by DNA damaging agents or by inhibitors of RNA polymerase II elongation. Interacts (via WHD region) with RIF1. Interacts with SMARCC2/BAF170, SMARCB1/BAF47 and the neuron-specific chromatin remodeling complex (nBAF complex). Interacts with ERCC5/XPG (via C-terminus); the interaction stimulates ERCC6/CSB binding to the DNA repair bubble and ERCC6/CSB ATPase activity. May form a complex composed of RNA polymerase II, ERCC6/CSB and ERCC5/XPG which associates with the DNA repair bubble during transcription-coupled nucleotide excision repair. Interacts with CAND1, CSTF1, DDX3X, DDX5, DDX17, DDX23, DHX36, HDAC1, HNRNPU, MTA2, PRPF3, PSMD3, RBBP4, SFPQ, SMARCA1, SMARCA2, TOP1, USP7, XRCC5, COPS3, COPS4, COPS6, DDX1, DDX41, GATAD2A, GATAD2B, PRPF4, PSMC5, SF3B2, CTR9, NONO, PSMD12 and TOP2A. In terms of processing, phosphorylated in a cell cycle-dependent manner at Ser-158 by cyclin A-CDK2 and at Ser-10 by ATM in response to DNA damage. Phosphorylation at these two sites promotes the intramolecular interaction of the N-terminal domain with the helicase ATP-binding domain, thereby probably releasing the inhibitory effect of the N-terminal domain on its ATPase activity. Phosphorylation is essential for its chromatin remodeling activity. Post-translationally, ubiquitinated at the C-terminus. Ubiquitination by the CSA complex leads to ERCC6 proteasomal degradation in a UV-dependent manner. Stabilized following interaction with KIAA1530/UVSSA, which promotes recruitment of deubiquitinating enzyme USP7, leading to deubiquitination of ERCC6 thereby preventing UV-induced degradation of ERCC6 by the proteasome. Sumoylation at Lys-205 in an UV-radiation-dependent manner is essential for its transcription-coupled nucleotide excision repair activity.

The protein localises to the nucleus. It is found in the chromosome. It carries out the reaction ATP + H2O = ADP + phosphate + H(+). Its function is as follows. Essential factor involved in transcription-coupled nucleotide excision repair (TC-NER), a process during which RNA polymerase II-blocking lesions are rapidly removed from the transcribed strand of active genes. Plays a central role in the initiation of the TC-NER process: specifically recognizes and binds RNA polymerase II stalled at a lesion, and mediates recruitment of ERCC8/CSA, initiating DNA damage excision by TFIIH recruitment. Upon DNA-binding, it locally modifies DNA conformation by wrapping the DNA around itself, thereby modifying the interface between stalled RNA polymerase II and DNA. Acts as a chromatin remodeler at DSBs; DNA-dependent ATPase-dependent activity is essential for this function. Plays an important role in regulating the choice of the DNA double-strand breaks (DSBs) repair pathway and G2/M checkpoint activation; DNA-dependent ATPase activity is essential for this function. Regulates the DNA repair pathway choice by inhibiting non-homologous end joining (NHEJ), thereby promoting the homologous recombination (HR)-mediated repair of DSBs during the S/G2 phases of the cell cycle. Mediates the activation of the ATM- and CHEK2-dependent DNA damage responses thus preventing premature entry of cells into mitosis following the induction of DNA DSBs. Remodels chromatin by evicting histones from chromatin flanking DSBs, limiting RIF1 accumulation at DSBs thereby promoting BRCA1-mediated HR. Required for stable recruitment of ELOA and CUL5 to DNA damage sites. Also involved in UV-induced translocation of ERCC8 to the nuclear matrix. Essential for neuronal differentiation and neuritogenesis; regulates transcription and chromatin remodeling activities required during neurogenesis. The protein is DNA excision repair protein ERCC-6 of Homo sapiens (Human).